Consider the following 717-residue polypeptide: Polyribonucleotide nucleotidyltransferase (717 aa).

Mg(2+) contacts are provided by Asp-486 and Asp-492. Residues 553–612 form the KH domain; it reads PRMITVKINPEKIRDVIGKGGSTIQALTKETGCTIDIQEDGTITIASTSSEGMAEAKRRI. In terms of domain architecture, S1 motif spans 622-690; it reads GKIYSGTVLK…EKGRMRLSIK (69 aa). Residues 690–717 are disordered; that stretch reads KAAKAEEGDVPATAPQAPGAGDATSQQQ.

Belongs to the polyribonucleotide nucleotidyltransferase family. The cofactor is Mg(2+).

It localises to the cytoplasm. The catalysed reaction is RNA(n+1) + phosphate = RNA(n) + a ribonucleoside 5'-diphosphate. Its function is as follows. Involved in mRNA degradation. Catalyzes the phosphorolysis of single-stranded polyribonucleotides processively in the 3'- to 5'-direction. This Ralstonia nicotianae (strain ATCC BAA-1114 / GMI1000) (Ralstonia solanacearum) protein is Polyribonucleotide nucleotidyltransferase.